Consider the following 106-residue polypeptide: uncharacterized protein (106 aa).

Residues 1 to 46 (MPQGGTPCRRARRAVRPERPTSPEGVFCVGGGAPGGPPDTTNTVSA) form a disordered region.

This is an uncharacterized protein from Gracula (BFDV).